The chain runs to 335 residues: Vitamin B12 import system permease protein BtuC (335 aa).

A run of 9 helical transmembrane segments spans residues 25-45, 67-87, 95-114, 118-140, 153-173, 200-220, 243-263, 286-306, and 308-328; these read LVVILLLSLLISLCAGDIWLW, LAVLMVGASLAVSGAVMQALF, GLLGVANGAGVALVMAVLLG, LPIWFLSACAIAGALLMTMLLLG, LLVGVALGIVCSAIMTWAVYF, LVLALLPIVLWLCCQGHVLNF, VLAIGLLVGVSVALAGVISFI, CALAGGGILLLADIVARIALF, and AELPIGVVTATLGAPLFIWLL.

The protein belongs to the binding-protein-dependent transport system permease family. FecCD subfamily. As to quaternary structure, the complex is composed of two ATP-binding proteins (BtuD), two transmembrane proteins (BtuC) and a solute-binding protein (BtuF).

It is found in the cell inner membrane. Part of the ABC transporter complex BtuCDF involved in vitamin B12 import. Involved in the translocation of the substrate across the membrane. The polypeptide is Vitamin B12 import system permease protein BtuC (Yersinia enterocolitica serotype O:8 / biotype 1B (strain NCTC 13174 / 8081)).